The following is a 672-amino-acid chain: UvrABC system protein B (672 aa).

The region spanning 26–181 (AGLEDGLAYQ…ILQRLAELQY (156 aa)) is the Helicase ATP-binding domain. 39–46 (GVTGSGKT) provides a ligand contact to ATP. The short motif at 92-115 (YYDYYQPEAYVPSSDTYIEKDASI) is the Beta-hairpin element. The Helicase C-terminal domain occupies 430-592 (QVDDLLSEIK…ITPKSIQKAV (163 aa)). A UVR domain is found at 631–666 (AKELRKLEEQMYHHARNLEFEEAAAVRDKIQHIRKG).

This sequence belongs to the UvrB family. As to quaternary structure, forms a heterotetramer with UvrA during the search for lesions. Interacts with UvrC in an incision complex.

The protein resides in the cytoplasm. The UvrABC repair system catalyzes the recognition and processing of DNA lesions. A damage recognition complex composed of 2 UvrA and 2 UvrB subunits scans DNA for abnormalities. Upon binding of the UvrA(2)B(2) complex to a putative damaged site, the DNA wraps around one UvrB monomer. DNA wrap is dependent on ATP binding by UvrB and probably causes local melting of the DNA helix, facilitating insertion of UvrB beta-hairpin between the DNA strands. Then UvrB probes one DNA strand for the presence of a lesion. If a lesion is found the UvrA subunits dissociate and the UvrB-DNA preincision complex is formed. This complex is subsequently bound by UvrC and the second UvrB is released. If no lesion is found, the DNA wraps around the other UvrB subunit that will check the other stand for damage. In Coxiella burnetii (strain CbuK_Q154) (Coxiella burnetii (strain Q154)), this protein is UvrABC system protein B.